The chain runs to 372 residues: 4-hydroxy-3-methylbut-2-en-1-yl diphosphate synthase (flavodoxin) (372 aa).

The [4Fe-4S] cluster site is built by cysteine 270, cysteine 273, cysteine 305, and glutamate 312.

This sequence belongs to the IspG family. It depends on [4Fe-4S] cluster as a cofactor.

The enzyme catalyses (2E)-4-hydroxy-3-methylbut-2-enyl diphosphate + oxidized [flavodoxin] + H2O + 2 H(+) = 2-C-methyl-D-erythritol 2,4-cyclic diphosphate + reduced [flavodoxin]. It participates in isoprenoid biosynthesis; isopentenyl diphosphate biosynthesis via DXP pathway; isopentenyl diphosphate from 1-deoxy-D-xylulose 5-phosphate: step 5/6. Functionally, converts 2C-methyl-D-erythritol 2,4-cyclodiphosphate (ME-2,4cPP) into 1-hydroxy-2-methyl-2-(E)-butenyl 4-diphosphate. In Aliivibrio fischeri (strain ATCC 700601 / ES114) (Vibrio fischeri), this protein is 4-hydroxy-3-methylbut-2-en-1-yl diphosphate synthase (flavodoxin).